Reading from the N-terminus, the 66-residue chain is MAKGKDVRVTVILECTSCVRNSVDKVSRGISRYITQKNRHNTPNRFELKKFCPYCYKHTIHGEIKK.

It belongs to the bacterial ribosomal protein bL33 family.

The protein localises to the plastid. The protein resides in the chloroplast. The polypeptide is Large ribosomal subunit protein bL33c (Solanum bulbocastanum (Wild potato)).